Here is a 558-residue protein sequence, read N- to C-terminus: Cytochrome P450 monooxygenase grgG (558 aa).

Residues Pro11–Leu31 traverse the membrane as a helical segment. Cys470 contacts heme.

This sequence belongs to the cytochrome P450 family. Requires heme as cofactor.

It is found in the membrane. The protein operates within secondary metabolite biosynthesis. Cytochrome P450 monooxygenase; part of the gene cluster that mediates the biosynthesis of gregatin A, a fungal polyketide featuring an alkylated furanone core. The PKS grgA synthesizes C11 and C4 polyketide chains in the presence and absence of the trans-enoyl reductase grgB, respectively. The polyketide transferase grgF is then responsible for the fusion of the two carbon chains to produce the furanone skeleton of gregatin A. Next, the cytochrome P450 monooxygenase grgG performs the oxidative cyclization to furnish the gregatin scaffold and leads to the formation of desmethylgregatin A. In this transformation, grgG initially abstracts a hydrogen atom from C-8 to generate a substrate radical, from which one electron is transferred to the iron-heme center to yield a carbocationic species. Heterocyclization along with double-bond isomerizations provides desmethylgregatin A with the furanone ring. Alternatively, grgG might provide hydroxylation at the C-8 radical, which is followed by dehydration to give the cyclized desmethylgregatin A. Finally, the O-methyltransferase grgD methylates the carboxyl group of desmethylgregatin A to provide gregatin A. The chain is Cytochrome P450 monooxygenase grgG (grgG) from Penicillium sp.